We begin with the raw amino-acid sequence, 359 residues long: Pyruvate dehydrogenase E1 component subunit beta, mitochondrial (359 aa).

The N-terminal 30 residues, 1-30 (MAAVSGLVRRPLREVSGLLKRRFHWTAPAA), are a transit peptide targeting the mitochondrion. Tyrosine 67 bears the Phosphotyrosine mark. Residue glutamate 89 participates in thiamine diphosphate binding. The K(+) site is built by isoleucine 142, alanine 190, isoleucine 191, aspartate 193, and asparagine 195. Position 354 is an N6-acetyllysine (lysine 354).

Heterotetramer of two PDHA1 and two PDHB subunits. The heterotetramer interacts with DLAT, and is part of the multimeric pyruvate dehydrogenase complex that contains multiple copies of pyruvate dehydrogenase (E1), dihydrolipoamide acetyltransferase (DLAT, E2) and lipoamide dehydrogenase (DLD, E3). These subunits are bound to an inner core composed of about 48 DLAT and 12 PDHX molecules. Interacts with DLAT. Thiamine diphosphate serves as cofactor.

The protein resides in the mitochondrion matrix. The catalysed reaction is N(6)-[(R)-lipoyl]-L-lysyl-[protein] + pyruvate + H(+) = N(6)-[(R)-S(8)-acetyldihydrolipoyl]-L-lysyl-[protein] + CO2. Functionally, the pyruvate dehydrogenase complex catalyzes the overall conversion of pyruvate to acetyl-CoA and CO(2), and thereby links the glycolytic pathway to the tricarboxylic cycle. The protein is Pyruvate dehydrogenase E1 component subunit beta, mitochondrial (PDHB) of Homo sapiens (Human).